The following is a 460-amino-acid chain: DNA repair protein RadA (460 aa).

The segment at 11 to 28 (CNECGADYPRWQGQCSAC) adopts a C4-type zinc-finger fold. 102 to 109 (GNPGAGKS) contributes to the ATP binding site. The RadA KNRFG motif motif lies at 258-262 (KNRFG). Residues 357 to 460 (DVFVNVVGGV…SDALSVFDDL (104 aa)) are lon-protease-like.

Belongs to the RecA family. RadA subfamily.

DNA-dependent ATPase involved in processing of recombination intermediates, plays a role in repairing DNA breaks. Stimulates the branch migration of RecA-mediated strand transfer reactions, allowing the 3' invading strand to extend heteroduplex DNA faster. Binds ssDNA in the presence of ADP but not other nucleotides, has ATPase activity that is stimulated by ssDNA and various branched DNA structures, but inhibited by SSB. Does not have RecA's homology-searching function. Genetic experiments involving combination of radA mutations with mutations in recA, recB, recG, recJ, recQ, ruvA and ruvC show it plays a role in recombination and recombinational repair, probably involving stabilizing or processing branched DNA or blocked replication forks. Is genetically synergistic to RecG and RuvABC. May be involved in recovery of genetic rearrangements during replication fork breakdown. In combination with RadD is important in recovery from double-strand DNA breaks (DSB). This Escherichia coli (strain K12) protein is DNA repair protein RadA.